Consider the following 893-residue polypeptide: MFPLRDTEMGASTFFASALPHDVCGSNGLPLTPNSIKILGRFQILKTITHPRLCQYVDITRGKHERLVVAAEHCENSLEDLLREGKLVSSSRILCIAYEVLQGLQYMNKHGMVHRALSPRNILLDRKGHVKLAKFGLYHMTAQGVDVDFPIGYPSYLAPEVIAQGMVKPSDHTQCEKPLPSGPKSDLWSLGIILFELCVGRKLFQTLEIAERLKFVITLGYVDDIVTVLAEEHGCLDIIKDLSENVITLLKKCLTFQPSKRPTPEELMHDHLFSEVSLTYPPFHKPAGLFSSSPRCADLTLPEDISQLCKDEDNDYLAERSIEEVYYLWCLAGGDLEKELVNKEIIRSKPPVCTLPNFVLEDGESFGQGRDRSSLLDDTTVTLSLCQLRNRLKDVGGEAFYPLLEDDQSTLPHSNSSSELSAAANLPLIIRERDTEYQLNRIVLFDRLLKAYPYKKNQIWKEARVDIPPLLRGITWAALLGVEGAIQAKYDAIDKDTPIPTDRQIEVDIPRCHQYDELLSSPEGHAKFRRVLKAWVVSHPDLVYWQGLDSLCAPFLYLNFNNEALAYACMSAFIPKYLYNFFLKDNSHVIQEYLTVFSQMIAFHDPELSNHLNEIGFIPDLYAIPWFLTMFTHVFPLHKIFHLWDTLLLGNSSFPFCIGVAILQQLRDRLLANGFNECILLFSDLPEIDIERCVRESINLFRWTPKSATYRQYAQPPRQANESNGTRSSMSCFSVDYQEAPRGDLSRDSIKLDDLKAEVSPRISAEDLIDLCELTGPSHSKTPIKKTKSSKPKLLVVDIRNSEDFNRGHISGSINVPFASAFTAEGDLIQCPATATLQSFKGRVVVIVGNAVKNTAAFAAHLVKSKYPRVCILDGGINKIKPTGLLTVPSPQI.

In terms of domain architecture, Protein kinase spans 1–274; the sequence is MFPLRDTEMG…EELMHDHLFS (274 aa). The region spanning 466–651 is the Rab-GAP TBC domain; the sequence is DIPPLLRGIT…HLWDTLLLGN (186 aa). The Rhodanese domain maps to 790–889; the sequence is SKPKLLVVDI…IKPTGLLTVP (100 aa).

It belongs to the protein kinase superfamily. As to quaternary structure, component of the FERRY complex.

The protein resides in the cytoplasm. Its subcellular location is the cytoskeleton. It localises to the spindle. It is found in the midbody. The protein localises to the early endosome. In terms of biological role, component of the FERRY complex (Five-subunit Endosomal Rab5 and RNA/ribosome intermediary). The FERRY complex directly interacts with mRNAs and RAB5A, and functions as a RAB5A effector involved in the localization and the distribution of specific mRNAs most likely by mediating their endosomal transport. The complex recruits mRNAs and ribosomes to early endosomes through direct mRNA-interaction. Also involved in the modulation of mTOR signaling and expression of mTOR complex components. Involved in the control of actin-cytoskeleton organization. The protein is TBC domain-containing protein kinase-like protein of Gallus gallus (Chicken).